A 146-amino-acid chain; its full sequence is Hemoglobin cathodic subunit beta (146 aa).

The Globin domain maps to 2 to 146; sequence EWSASERSTI…VVSALSKQYF (145 aa). 2 residues coordinate heme b: histidine 63 and histidine 92.

The protein belongs to the globin family. As to quaternary structure, heterotetramer of two alpha chains and two beta chains. In terms of tissue distribution, red blood cells.

Its function is as follows. Involved in oxygen transport from gills to the various peripheral tissues. This Anguilla anguilla (European freshwater eel) protein is Hemoglobin cathodic subunit beta (hbb2).